The sequence spans 364 residues: Medium-wave-sensitive opsin 2 (364 aa).

Residues 1–23 (MAQQWSLQRLAGRHPQDSYEDST) are disordered. Topologically, residues 1 to 52 (MAQQWSLQRLAGRHPQDSYEDSTQSSIFTYTNSNSTRGPFEGPNYHIAPRWV) are extracellular. The required for 11-cis-retinal regeneration stretch occupies residues 17–43 (DSYEDSTQSSIFTYTNSNSTRGPFEGP). Asn-34 carries N-linked (GlcNAc...) asparagine glycosylation. A helical membrane pass occupies residues 53 to 77 (YHLTSVWMIFVVIASVFTNGLVLAA). Residues 78-89 (TMKFKKLRHPLN) lie on the Cytoplasmic side of the membrane. The helical transmembrane segment at 90–115 (WILVNLAVADLAETVIASTISVVNQV) threads the bilayer. Over 116–129 (YGYFVLGHPMCVLE) the chain is Extracellular. A disulfide bond links Cys-126 and Cys-203. A helical transmembrane segment spans residues 130-149 (GYTVSLCGITGLWSLAIISW). At 150–168 (ERWMVVCKPFGNVRFDAKL) the chain is on the cytoplasmic side. Residues 169–192 (AIVGIAFSWIWAAVWTAPPIFGWS) form a helical membrane-spanning segment. Residues 193 to 218 (RYWPHGLKTSCGPDVFSGSSYPGVQS) lie on the Extracellular side of the membrane. The chain crosses the membrane as a helical span at residues 219–246 (YMIVLMVTCCITPLSIIVLCYLQVWLAI). Over 247–268 (RAVAKQQKESESTQKAEKEVTR) the chain is Cytoplasmic. The chain crosses the membrane as a helical span at residues 269 to 292 (MVVVMVLAFCFCWGPYAFFACFAA). Topologically, residues 293 to 300 (ANPGYPFH) are extracellular. The chain crosses the membrane as a helical span at residues 301 to 325 (PLMAALPAFFAKSATIYNPVIYVFM). Lys-312 carries the N6-(retinylidene)lysine modification. Over 326–364 (NRQFRNCILQLFGKKVDDGSELSSASKTEVSSVSSVSPA) the chain is Cytoplasmic.

This sequence belongs to the G-protein coupled receptor 1 family. Opsin subfamily. N-glycosylated. O-glycosylated. In terms of processing, phosphorylated on some or all of the serine and threonine residues present in the C-terminal region.

The protein resides in the cell membrane. Visual pigments are the light-absorbing molecules that mediate vision. They consist of an apoprotein, opsin, covalently linked to cis-retinal. The polypeptide is Medium-wave-sensitive opsin 2 (Homo sapiens (Human)).